Here is a 214-residue protein sequence, read N- to C-terminus: Ribosomal RNA small subunit methyltransferase G (214 aa).

Residues Gly-81, Met-86, 132–133 (VE), and Arg-147 contribute to the S-adenosyl-L-methionine site.

This sequence belongs to the methyltransferase superfamily. RNA methyltransferase RsmG family.

It is found in the cytoplasm. The enzyme catalyses guanosine(527) in 16S rRNA + S-adenosyl-L-methionine = N(7)-methylguanosine(527) in 16S rRNA + S-adenosyl-L-homocysteine. In terms of biological role, specifically methylates the N7 position of guanine in position 527 of 16S rRNA. The protein is Ribosomal RNA small subunit methyltransferase G of Pseudomonas aeruginosa (strain UCBPP-PA14).